A 78-amino-acid chain; its full sequence is Acyl carrier protein (78 aa).

One can recognise a Carrier domain in the interval 4 to 78 (AEIKDKVYDI…QQAIDYIVKK (75 aa)). An O-(pantetheine 4'-phosphoryl)serine modification is found at serine 39.

Belongs to the acyl carrier protein (ACP) family. 4'-phosphopantetheine is transferred from CoA to a specific serine of apo-ACP by AcpS. This modification is essential for activity because fatty acids are bound in thioester linkage to the sulfhydryl of the prosthetic group.

The protein resides in the cytoplasm. It functions in the pathway lipid metabolism; fatty acid biosynthesis. Functionally, carrier of the growing fatty acid chain in fatty acid biosynthesis. The chain is Acyl carrier protein from Chlorobium limicola (strain DSM 245 / NBRC 103803 / 6330).